We begin with the raw amino-acid sequence, 943 residues long: MYLSRNPSGAALAAILVALILSCNFPSSTAGIEYSDVLPDSFPSAPAESLPHFLLEPEDAYIVKNKPVELVCKANPATQIYFKCNGEWVNQNDHITKERVDDVTGLVVREVQIEVSRQQVEELFGLEDYWCQCVAWSSAGTTKSKRSYVRIAYLRKNFDQEPLGKEVALEQEALLQCRPPEGVPPAEVEWLKNEEIIDPTKDTNFLITIDHNLIIKQARLSDTANYTCVSKNIVAKRRSTTATVIVFVNGGWSSWTEWSPCNNRCGHGWQKRTRTCTNPAPLNGGTMCEGQQYQKFACNTMCPVDGGWTEWSKWSACSTECTHWRSRECNAPTPKNGGKDCSGMLLDSKNCTDGLCMQNKRVLGETKSRLLESTGDVALYAGLVVAIFIVIILLMAVGIVVYRRNCREFDTDITDSSAALTGGFHPVNFKTSRHDNSQLIHPAMQPDLTANAGIYRGNMYALQDSADKIPMTNSPLLDPLPNLKIKVYNSSTVGSSPGIHDGNNLLGTKPTGTYPSDNNIMNARNKNMSMQHLLTLPRDSSNSVTGTFGSLGGRLTFPNTGVSLLIPQGAIPQGKYYEMYLMINKRENTVLPSEGTQTILSPIITCGPTGLLLCKPVILTVPHCADINTSDWILQLKTQSHQGNWEEVVTLNEETLNTPCYCQLESHSCHTLLDQLGTYAFVGESYSRSAIKRLQLAIFAPMLCTSLEYNLKVYCVEDTPDALKEVLELEKTLGGYLVEEPKLLMFKDSYHNLRLSIHDIPHSLWRSKLMAKYQEIPFYHIWSGSQRTLHCTFTLERYSLAATELTCKICVRQVEGEGQIFQLHTLLEENVKSFDPFCSQAENSVTTHLGPYAFKIPFSIRQKICNSLDAPNSRGNDWRLLAQKLCMDRYLNYFATKASPTGVILDLWEALHQDDGDLNTLASALEEMGKSEMMLVMATDGDC.

The first 30 residues, 1-30, serve as a signal peptide directing secretion; that stretch reads MYLSRNPSGAALAAILVALILSCNFPSSTA. The Extracellular segment spans residues 31–380; the sequence is GIEYSDVLPD…LESTGDVALY (350 aa). One can recognise an Ig-like domain in the interval 51–148; sequence PHFLLEPEDA…AGTTKSKRSY (98 aa). Disulfide bonds link cysteine 72-cysteine 133, cysteine 84-cysteine 131, cysteine 177-cysteine 228, cysteine 261-cysteine 298, cysteine 265-cysteine 302, cysteine 276-cysteine 288, cysteine 317-cysteine 351, cysteine 321-cysteine 356, and cysteine 329-cysteine 341. Residues 150–245 form the Ig-like C2-type domain; the sequence is RIAYLRKNFD…KRRSTTATVI (96 aa). Asparagine 225 carries N-linked (GlcNAc...) asparagine glycosylation. 2 TSP type-1 domains span residues 249–303 and 305–357; these read NGGW…TMCP and DGGW…GLCM. An N-linked (GlcNAc...) asparagine glycan is attached at asparagine 350. Residues 381–401 traverse the membrane as a helical segment; that stretch reads AGLVVAIFIVIILLMAVGIVV. The Cytoplasmic portion of the chain corresponds to 402-943; sequence YRRNCREFDT…MLVMATDGDC (542 aa). The ZU5 domain maps to 542–685; that stretch reads NSVTGTFGSL…LGTYAFVGES (144 aa). The UPA domain stretch occupies residues 688-836; that stretch reads RSAIKRLQLA…LEENVKSFDP (149 aa). A Death domain is found at 863-941; it reads KICNSLDAPN…EMMLVMATDG (79 aa).

The protein belongs to the unc-5 family. In terms of assembly, interacts (via extracellular domain) with flrt3 (via extracellular domain). Interacts with rnd1. Post-translationally, phosphorylated on cytoplasmic tyrosine residues. As to expression, in the developing visual system, it is expressed within the developing optic vesicles and later become restricted to the dorsal ciliary marginal zone, a site of retinoblast proliferation and differentiation.

The protein resides in the cell membrane. Its function is as follows. Plays a role in cell-cell adhesion during embryonic development. Receptor for netrin required for axon guidance. Mediates axon repulsion of neuronal growth cones in the developing nervous system upon ligand binding. This is Netrin receptor UNC5B-a (unc5b-a) from Xenopus laevis (African clawed frog).